Here is a 283-residue protein sequence, read N- to C-terminus: MIKIGAHMPISGGFKRVPKETHEIGGNAFQIFPHNPRQWKAKLPKDDDVEIFKKRVKEYNLTEDSMLCHSGYLINIASPKEEIWQKSLELLILEMNICKTLGIRYLNIHPGSHLNSGVEKGINQIVKALNIAMEKEKETFILLENVTKKGGNIGSTLEELKMIIEMVKYPERIGITIDTCHAFDAGYDITNKEKLDKFLKMIDKLFSLEKLKFIHLNDSKNELGSNKDRHENIGKGKIGVKGLKTFLTNETIQKIPWILETPGDNEVHKNDIKEVFNILGVKQ.

Zn(2+) is bound by residues H69, H109, E144, D178, H181, H215, D228, H230, and E260.

Belongs to the AP endonuclease 2 family. It depends on Zn(2+) as a cofactor.

It catalyses the reaction Endonucleolytic cleavage to 5'-phosphooligonucleotide end-products.. Endonuclease IV plays a role in DNA repair. It cleaves phosphodiester bonds at apurinic or apyrimidinic (AP) sites, generating a 3'-hydroxyl group and a 5'-terminal sugar phosphate. This Thermosipho melanesiensis (strain DSM 12029 / CIP 104789 / BI429) protein is Probable endonuclease 4.